Consider the following 113-residue polypeptide: MLLLLIPVLGMIFALRDARAQSVSQHNHHVILSEAASLELGCNYSYGGTVNLFWYVQYPGQHLQLLLKYFSGDPLVKGIKGFEAEFIKSKFSFNLRKPSVQWSDTAEYFCAVN.

Residues 1 to 20 (MLLLLIPVLGMIFALRDARA) form the signal peptide. Residues 21–113 (QSVSQHNHHV…DTAEYFCAVN (93 aa)) enclose the Ig-like domain. The cysteines at positions 42 and 110 are disulfide-linked. N-linked (GlcNAc...) asparagine glycosylation occurs at N43.

Alpha-beta TR is a heterodimer composed of an alpha and beta chain; disulfide-linked. The alpha-beta TR is associated with the transmembrane signaling CD3 coreceptor proteins to form the TR-CD3 (TcR or TCR). The assembly of alpha-beta TR heterodimers with CD3 occurs in the endoplasmic reticulum where a single alpha-beta TR heterodimer associates with one CD3D-CD3E heterodimer, one CD3G-CD3E heterodimer and one CD247 homodimer forming a stable octameric structure. CD3D-CD3E and CD3G-CD3E heterodimers preferentially associate with TR alpha and TR beta chains, respectively. The association of the CD247 homodimer is the last step of TcR assembly in the endoplasmic reticulum and is required for transport to the cell surface.

The protein resides in the cell membrane. Its function is as follows. V region of the variable domain of T cell receptor (TR) alpha chain that participates in the antigen recognition. Alpha-beta T cell receptors are antigen specific receptors which are essential to the immune response and are present on the cell surface of T lymphocytes. Recognize peptide-major histocompatibility (MH) (pMH) complexes that are displayed by antigen presenting cells (APC), a prerequisite for efficient T cell adaptive immunity against pathogens. Binding of alpha-beta TR to pMH complex initiates TR-CD3 clustering on the cell surface and intracellular activation of LCK that phosphorylates the ITAM motifs of CD3G, CD3D, CD3E and CD247 enabling the recruitment of ZAP70. In turn ZAP70 phosphorylates LAT, which recruits numerous signaling molecules to form the LAT signalosome. The LAT signalosome propagates signal branching to three major signaling pathways, the calcium, the mitogen-activated protein kinase (MAPK) kinase and the nuclear factor NF-kappa-B (NF-kB) pathways, leading to the mobilization of transcription factors that are critical for gene expression and essential for T cell growth and differentiation. The T cell repertoire is generated in the thymus, by V-(D)-J rearrangement. This repertoire is then shaped by intrathymic selection events to generate a peripheral T cell pool of self-MH restricted, non-autoaggressive T cells. Post-thymic interaction of alpha-beta TR with the pMH complexes shapes TR structural and functional avidity. The polypeptide is T cell receptor alpha variable 8-1 (Homo sapiens (Human)).